Reading from the N-terminus, the 637-residue chain is Zinc-transporting ATPase (637 aa).

The next 4 helical transmembrane spans lie at 43–63 (GWLLSGYQVLSIILFLLAFVI), 89–109 (IFAAIGSALIGYWAEGAILIF), 258–278 (GVLIAVALLLFVPHFALGWSW), and 286–306 (MVFMVVASPCALVASIMPAAL). Residue aspartate 337 is the 4-aspartylphosphate intermediate of the active site. Positions 535 and 539 each coordinate Mg(2+). A helical transmembrane segment spans residues 599 to 619 (VICLLICANFLQAMELPFGVI).

This sequence belongs to the cation transport ATPase (P-type) (TC 3.A.3) family. Type IB subfamily.

It is found in the cell membrane. It catalyses the reaction Zn(2+)(out) + ATP(in) + H2O(in) = Zn(2+)(in) + ADP(in) + phosphate(in) + H(+)(in). Its function is as follows. Couples the hydrolysis of ATP with the transport of zinc into the cell. Plays an important role in protecting cells against oxidative stress. ZosA-mediated zinc transport is required for post-transcriptional control of comK and competence development. The polypeptide is Zinc-transporting ATPase (zosA) (Bacillus subtilis (strain 168)).